We begin with the raw amino-acid sequence, 423 residues long: Imidazolonepropionase (423 aa).

Fe(3+) is bound by residues H78 and H80. Residues H78 and H80 each coordinate Zn(2+). Residues R87, Y150, and H183 each contribute to the 4-imidazolone-5-propanoate site. An N-formimidoyl-L-glutamate-binding site is contributed by Y150. H247 contacts Fe(3+). H247 serves as a coordination point for Zn(2+). 4-imidazolone-5-propanoate is bound at residue E250. Position 322 (D322) interacts with Fe(3+). Residue D322 participates in Zn(2+) binding. N-formimidoyl-L-glutamate is bound by residues N324 and G326. S327 is a binding site for 4-imidazolone-5-propanoate.

Belongs to the metallo-dependent hydrolases superfamily. HutI family. Requires Zn(2+) as cofactor. Fe(3+) serves as cofactor.

It localises to the cytoplasm. The enzyme catalyses 4-imidazolone-5-propanoate + H2O = N-formimidoyl-L-glutamate. Its pathway is amino-acid degradation; L-histidine degradation into L-glutamate; N-formimidoyl-L-glutamate from L-histidine: step 3/3. Functionally, catalyzes the hydrolytic cleavage of the carbon-nitrogen bond in imidazolone-5-propanoate to yield N-formimidoyl-L-glutamate. It is the third step in the universal histidine degradation pathway. The protein is Imidazolonepropionase of Bacillus thuringiensis (strain Al Hakam).